The following is a 246-amino-acid chain: 1-(5-phosphoribosyl)-5-[(5-phosphoribosylamino)methylideneamino] imidazole-4-carboxamide isomerase (246 aa).

Aspartate 8 serves as the catalytic Proton acceptor. The active-site Proton donor is the aspartate 130.

It belongs to the HisA/HisF family.

The protein localises to the cytoplasm. The catalysed reaction is 1-(5-phospho-beta-D-ribosyl)-5-[(5-phospho-beta-D-ribosylamino)methylideneamino]imidazole-4-carboxamide = 5-[(5-phospho-1-deoxy-D-ribulos-1-ylimino)methylamino]-1-(5-phospho-beta-D-ribosyl)imidazole-4-carboxamide. Its pathway is amino-acid biosynthesis; L-histidine biosynthesis; L-histidine from 5-phospho-alpha-D-ribose 1-diphosphate: step 4/9. The chain is 1-(5-phosphoribosyl)-5-[(5-phosphoribosylamino)methylideneamino] imidazole-4-carboxamide isomerase from Halorhodospira halophila (strain DSM 244 / SL1) (Ectothiorhodospira halophila (strain DSM 244 / SL1)).